Here is a 75-residue protein sequence, read N- to C-terminus: Defensin-like protein (75 aa).

Residues 1-24 (MEKKSIAGLCFLFLVLFVAQEVVV) form the signal peptide. Cystine bridges form between Cys-31/Cys-75, Cys-42/Cys-63, Cys-48/Cys-69, and Cys-52/Cys-71.

It belongs to the DEFL family.

Its subcellular location is the secreted. In terms of biological role, this protein is required for germination. This Vigna unguiculata (Cowpea) protein is Defensin-like protein.